A 380-amino-acid polypeptide reads, in one-letter code: DNA replication and repair protein RecF (380 aa).

30 to 37 (GPNGFGKT) provides a ligand contact to ATP.

This sequence belongs to the RecF family.

It localises to the cytoplasm. Functionally, the RecF protein is involved in DNA metabolism; it is required for DNA replication and normal SOS inducibility. RecF binds preferentially to single-stranded, linear DNA. It also seems to bind ATP. This is DNA replication and repair protein RecF from Mycobacterium sp. (strain JLS).